The sequence spans 450 residues: Glucose-6-phosphate isomerase (450 aa).

A Phosphothreonine modification is found at threonine 39. The Proton donor role is filled by glutamate 291. Residues histidine 312 and lysine 426 contribute to the active site.

It belongs to the GPI family.

It is found in the cytoplasm. It carries out the reaction alpha-D-glucose 6-phosphate = beta-D-fructose 6-phosphate. Its pathway is carbohydrate biosynthesis; gluconeogenesis. The protein operates within carbohydrate degradation; glycolysis; D-glyceraldehyde 3-phosphate and glycerone phosphate from D-glucose: step 2/4. Catalyzes the reversible isomerization of glucose-6-phosphate to fructose-6-phosphate. The protein is Glucose-6-phosphate isomerase of Bacillus cereus (strain ATCC 10987 / NRS 248).